A 291-amino-acid chain; its full sequence is Potassium-transporting ATPase subunit beta (291 aa).

Over 1 to 36 the chain is Cytoplasmic; sequence MAALQEKKTCGQRMEEFQRYCWNPDTGQMLGRTLSR. The helical; Signal-anchor for type II membrane protein transmembrane segment at 37–57 threads the bilayer; it reads WVWISLYYVAFYVVMTGLFAL. Residues 58 to 291 lie on the Extracellular side of the membrane; sequence CLYVLMQTVD…KVEFKLKIEK (234 aa). Residues Asn-99, Asn-103, Asn-130, Asn-146, and Asn-161 are each glycosylated (N-linked (GlcNAc...) asparagine). Cys-131 and Cys-152 are disulfide-bonded. An intrachain disulfide couples Cys-162 to Cys-178. 2 N-linked (GlcNAc...) asparagine glycosylation sites follow: Asn-193 and Asn-222. The interval 194–291 is immunoglobulin-like; sequence GSAPRVDCAF…KVEFKLKIEK (98 aa). Cys-201 and Cys-263 are joined by a disulfide.

This sequence belongs to the X(+)/potassium ATPases subunit beta family. As to quaternary structure, the ATPase pump is composed of two subunits: alpha (catalytic) and beta (regulatory). Interacts with alpha subunit ATP12A; this interaction is required for the formation of a functionally active pump and targeting at the plasma membrane. Interacts (via N-terminus) with alpha subunit ATP4A (via the P-domain). Post-translationally, N-glycosylation is necessary for assembly and functional expression of the pump at the plasma membrane.

It localises to the apical cell membrane. The protein localises to the cell membrane. Functionally, the beta subunit of the gastric H(+)/K(+) ATPase pump which transports H(+) ions in exchange for K(+) ions across the apical membrane of parietal cells. Plays a structural and regulatory role in the assembly and membrane targeting of a functionally active pump. Within a transport cycle, the transfer of a H(+) ion across the membrane is coupled to ATP hydrolysis and is associated with a transient phosphorylation of the alpha subunit that shifts the pump conformation from inward-facing (E1) to outward-facing state (E2). Interacts with the phosphorylation domain of the alpha subunit and functions as a ratchet, stabilizing the lumenal-open E2 conformation and preventing the reverse reaction of the transport cycle. The chain is Potassium-transporting ATPase subunit beta from Homo sapiens (Human).